A 426-amino-acid polypeptide reads, in one-letter code: Glutamate-1-semialdehyde 2,1-aminomutase (426 aa).

Lysine 265 bears the N6-(pyridoxal phosphate)lysine mark.

It belongs to the class-III pyridoxal-phosphate-dependent aminotransferase family. HemL subfamily. As to quaternary structure, homodimer. It depends on pyridoxal 5'-phosphate as a cofactor.

It localises to the cytoplasm. The enzyme catalyses (S)-4-amino-5-oxopentanoate = 5-aminolevulinate. It participates in porphyrin-containing compound metabolism; protoporphyrin-IX biosynthesis; 5-aminolevulinate from L-glutamyl-tRNA(Glu): step 2/2. The chain is Glutamate-1-semialdehyde 2,1-aminomutase from Salmonella choleraesuis (strain SC-B67).